Here is a 263-residue protein sequence, read N- to C-terminus: Phosphonoacetaldehyde hydrolase (263 aa).

The active-site Nucleophile is the D10. Residues D10 and A12 each coordinate Mg(2+). K51 serves as the catalytic Schiff-base intermediate with substrate. D184 contacts Mg(2+).

This sequence belongs to the HAD-like hydrolase superfamily. PhnX family. As to quaternary structure, homodimer. The cofactor is Mg(2+).

It catalyses the reaction phosphonoacetaldehyde + H2O = acetaldehyde + phosphate + H(+). Its function is as follows. Involved in phosphonate degradation. The polypeptide is Phosphonoacetaldehyde hydrolase (Bacteroides fragilis (strain ATCC 25285 / DSM 2151 / CCUG 4856 / JCM 11019 / LMG 10263 / NCTC 9343 / Onslow / VPI 2553 / EN-2)).